The chain runs to 88 residues: LYR motif-containing protein 2 (88 aa).

A mitochondrion-targeting transit peptide spans 1-19 (MAASRLPPATLTLKQFVRR).

The protein belongs to the complex I LYR family.

The protein resides in the mitochondrion. Involved in efficient integration of the N-module into mitochondrial respiratory chain complex I. This chain is LYR motif-containing protein 2 (LYRM2), found in Homo sapiens (Human).